The chain runs to 328 residues: Peroxisomal adenine nucleotide transporter 1 (328 aa).

6 helical membrane passes run 1–21 (MLTL…NIAV), 78–98 (TVTT…YTFI), 128–148 (LVLG…MAVV), 185–202 (LRTG…YASF), 226–246 (FILG…LIVA), and 277–297 (WKGV…LFAF). Solcar repeat units follow at residues 1-101 (MLTL…IRKS), 122-208 (PSTI…LKEV), and 220-304 (LSAV…LTKS).

It belongs to the mitochondrial carrier (TC 2.A.29) family.

The protein resides in the peroxisome membrane. In terms of biological role, adenine nucleotide transporter involved in the uniport of ATP and adenine nucleotide hetero-exchange transport between the cytosol and the peroxisomal lumen. This transport is accompanied by a proton transport from the peroxisomal lumen to the cytosol. Transport of ATP into the peroxisome is required for beta-oxidation of medium-chain fatty acids. Required for growth on medium-chain fatty acids, pH gradient formation in peroxisomes and for normal peroxisome proliferation. The sequence is that of Peroxisomal adenine nucleotide transporter 1 (ANT1) from Saccharomyces cerevisiae (strain ATCC 204508 / S288c) (Baker's yeast).